Consider the following 286-residue polypeptide: 33 kDa chaperonin (286 aa).

Cystine bridges form between Cys225/Cys227 and Cys258/Cys261.

Belongs to the HSP33 family. In terms of processing, under oxidizing conditions two disulfide bonds are formed involving the reactive cysteines. Under reducing conditions zinc is bound to the reactive cysteines and the protein is inactive.

The protein localises to the cytoplasm. Its function is as follows. Redox regulated molecular chaperone. Protects both thermally unfolding and oxidatively damaged proteins from irreversible aggregation. Plays an important role in the bacterial defense system toward oxidative stress. This is 33 kDa chaperonin from Shewanella sediminis (strain HAW-EB3).